We begin with the raw amino-acid sequence, 541 residues long: 2-succinyl-5-enolpyruvyl-6-hydroxy-3-cyclohexene-1-carboxylate synthase (541 aa).

The protein belongs to the TPP enzyme family. MenD subfamily. In terms of assembly, homodimer. The cofactor is Mg(2+). Mn(2+) is required as a cofactor. Requires thiamine diphosphate as cofactor.

It carries out the reaction isochorismate + 2-oxoglutarate + H(+) = 5-enolpyruvoyl-6-hydroxy-2-succinyl-cyclohex-3-ene-1-carboxylate + CO2. It participates in quinol/quinone metabolism; 1,4-dihydroxy-2-naphthoate biosynthesis; 1,4-dihydroxy-2-naphthoate from chorismate: step 2/7. Its pathway is quinol/quinone metabolism; menaquinone biosynthesis. Catalyzes the thiamine diphosphate-dependent decarboxylation of 2-oxoglutarate and the subsequent addition of the resulting succinic semialdehyde-thiamine pyrophosphate anion to isochorismate to yield 2-succinyl-5-enolpyruvyl-6-hydroxy-3-cyclohexene-1-carboxylate (SEPHCHC). The polypeptide is 2-succinyl-5-enolpyruvyl-6-hydroxy-3-cyclohexene-1-carboxylate synthase (Leuconostoc citreum (strain KM20)).